Here is a 246-residue protein sequence, read N- to C-terminus: Acetylglutamate kinase (246 aa).

Residues 30 to 31 (GG), Arg52, and Asn151 each bind substrate.

Belongs to the acetylglutamate kinase family. ArgB subfamily.

The protein localises to the cytoplasm. The enzyme catalyses N-acetyl-L-glutamate + ATP = N-acetyl-L-glutamyl 5-phosphate + ADP. Its pathway is amino-acid biosynthesis; L-arginine biosynthesis; N(2)-acetyl-L-ornithine from L-glutamate: step 2/4. Functionally, catalyzes the ATP-dependent phosphorylation of N-acetyl-L-glutamate. The sequence is that of Acetylglutamate kinase from Methanopyrus kandleri (strain AV19 / DSM 6324 / JCM 9639 / NBRC 100938).